Here is a 71-residue protein sequence, read N- to C-terminus: Delta-actitoxin-Avd2b 2 (71 aa).

The first 20 residues, 1-20, serve as a signal peptide directing secretion; it reads MNRLLVFLMLGAAFMLVVSA. Residues 21-41 constitute a propeptide that is removed on maturation; sequence NDAYGDEPAFKDLNQGDESLG. Disulfide bonds link cysteine 46–cysteine 61, cysteine 47–cysteine 55, and cysteine 49–cysteine 66.

This sequence belongs to the sea anemone short toxin (type III) family.

It is found in the secreted. The protein localises to the nematocyst. In terms of biological role, voltage-gated sodium channel (Nav) inhibitor. 1 uM completely inhibits insect voltage-gated sodium channel inactivation (DmNav1 from D.melanogaster). The sequence is that of Delta-actitoxin-Avd2b 2 from Anemonia viridis (Snakelocks anemone).